A 957-amino-acid polypeptide reads, in one-letter code: Glycine dehydrogenase (decarboxylating) (957 aa).

Lys708 carries the N6-(pyridoxal phosphate)lysine modification.

Belongs to the GcvP family. In terms of assembly, the glycine cleavage system is composed of four proteins: P, T, L and H. The cofactor is pyridoxal 5'-phosphate.

It catalyses the reaction N(6)-[(R)-lipoyl]-L-lysyl-[glycine-cleavage complex H protein] + glycine + H(+) = N(6)-[(R)-S(8)-aminomethyldihydrolipoyl]-L-lysyl-[glycine-cleavage complex H protein] + CO2. The glycine cleavage system catalyzes the degradation of glycine. The P protein binds the alpha-amino group of glycine through its pyridoxal phosphate cofactor; CO(2) is released and the remaining methylamine moiety is then transferred to the lipoamide cofactor of the H protein. In Salmonella typhimurium (strain LT2 / SGSC1412 / ATCC 700720), this protein is Glycine dehydrogenase (decarboxylating).